Reading from the N-terminus, the 186-residue chain is MMNHAVARRYARALFELAQEKGLLDQVNRELELVVSMYETDSYLRAFMNDQRISPSQKRKVLASVLEGKVSPLVLHFLYVVVQKRREPHLPSMYRAFQDLANEAMGVVEVEVRSAVPLAEETARNLEAKLTTKLGKRVKLRTQVAPELIGGLAVRVGDTLMDGSVRTRLRRMHERLISAQSNVIEG.

This sequence belongs to the ATPase delta chain family. In terms of assembly, F-type ATPases have 2 components, F(1) - the catalytic core - and F(0) - the membrane proton channel. F(1) has five subunits: alpha(3), beta(3), gamma(1), delta(1), epsilon(1). F(0) has three main subunits: a(1), b(2) and c(10-14). The alpha and beta chains form an alternating ring which encloses part of the gamma chain. F(1) is attached to F(0) by a central stalk formed by the gamma and epsilon chains, while a peripheral stalk is formed by the delta and b chains.

The protein localises to the cell membrane. Functionally, f(1)F(0) ATP synthase produces ATP from ADP in the presence of a proton or sodium gradient. F-type ATPases consist of two structural domains, F(1) containing the extramembraneous catalytic core and F(0) containing the membrane proton channel, linked together by a central stalk and a peripheral stalk. During catalysis, ATP synthesis in the catalytic domain of F(1) is coupled via a rotary mechanism of the central stalk subunits to proton translocation. In terms of biological role, this protein is part of the stalk that links CF(0) to CF(1). It either transmits conformational changes from CF(0) to CF(1) or is implicated in proton conduction. The protein is ATP synthase subunit delta of Symbiobacterium thermophilum (strain DSM 24528 / JCM 14929 / IAM 14863 / T).